The following is a 124-amino-acid chain: Photoactive yellow protein (124 aa).

The PAS domain occupies A22 to G85. Position 68 is an S-(4-hydroxycinnamyl)cysteine (C68).

Belongs to the photoactive yellow protein family. The 4-hydroxycinnamic acid (p-coumaric acid) chromophore is covalently bound via a thioester linkage.

Functionally, this photoactive protein is a photoreceptor with kinetics similar to that of rhodopsin. This is Photoactive yellow protein (pyp) from Cereibacter sphaeroides (strain ATCC 17023 / DSM 158 / JCM 6121 / CCUG 31486 / LMG 2827 / NBRC 12203 / NCIMB 8253 / ATH 2.4.1.) (Rhodobacter sphaeroides).